An 896-amino-acid chain; its full sequence is Myelin regulatory factor-like protein (896 aa).

Residues 111 to 403 constitute a DNA-binding region (NDT80); the sequence is GLPHRTFHNC…SNPGQFENDI (293 aa). The Peptidase S74 domain occupies 449-557; it reads SDSRAKQNVQ…KLTNNLEERI (109 aa). Positions 541-573 form a coiled coil; sequence GAVKQLCKLTNNLEERIEELEIWNRKLARLKRL. A helical transmembrane segment spans residues 622–638; the sequence is VFQSLVITLIAVMAFCL. The segment covering 648–658 has biased composition (polar residues); it reads APSSNLTSSQE. Residues 648–672 form a disordered region; sequence APSSNLTSSQEPALPSTASPSAPNT. Low complexity predominate over residues 659–672; the sequence is PALPSTASPSAPNT.

Belongs to the MRF family.

It is found in the membrane. This chain is Myelin regulatory factor-like protein (MYRFL), found in Bos taurus (Bovine).